Consider the following 222-residue polypeptide: UPF0173 metal-dependent hydrolase Nther_2337 (222 aa).

This sequence belongs to the UPF0173 family.

The protein is UPF0173 metal-dependent hydrolase Nther_2337 of Natranaerobius thermophilus (strain ATCC BAA-1301 / DSM 18059 / JW/NM-WN-LF).